The sequence spans 219 residues: Proteasome subunit beta (219 aa).

The propeptide at 1 to 14 (MISNSEYHKEYMKG) is removed in mature form; by autocatalysis. The active-site Nucleophile is the Thr-15.

It belongs to the peptidase T1B family. In terms of assembly, the 20S proteasome core is composed of 14 alpha and 14 beta subunits that assemble into four stacked heptameric rings, resulting in a barrel-shaped structure. The two inner rings, each composed of seven catalytic beta subunits, are sandwiched by two outer rings, each composed of seven alpha subunits. The catalytic chamber with the active sites is on the inside of the barrel. Has a gated structure, the ends of the cylinder being occluded by the N-termini of the alpha-subunits. Is capped at one or both ends by the proteasome regulatory ATPase, PAN.

It is found in the cytoplasm. It carries out the reaction Cleavage of peptide bonds with very broad specificity.. The formation of the proteasomal ATPase PAN-20S proteasome complex, via the docking of the C-termini of PAN into the intersubunit pockets in the alpha-rings, triggers opening of the gate for substrate entry. Interconversion between the open-gate and close-gate conformations leads to a dynamic regulation of the 20S proteasome proteolysis activity. Its function is as follows. Component of the proteasome core, a large protease complex with broad specificity involved in protein degradation. This Methanococcus maripaludis (strain C5 / ATCC BAA-1333) protein is Proteasome subunit beta.